We begin with the raw amino-acid sequence, 145 residues long: Allergen MAG29 (145 aa).

Disordered stretches follow at residues 1-21 and 103-145; these read KDDI…DDKQ and AGGA…EEVD. The span at 104-137 shows a compositional bias: gly residues; that stretch reads GGAGAGGMPGGFPGGFPGTDGSGGGAAGGDGGKS.

It belongs to the heat shock protein 70 family.

This chain is Allergen MAG29 (MAG29), found in Dermatophagoides farinae (American house dust mite).